Here is a 121-residue protein sequence, read N- to C-terminus: NAD(P)H-quinone oxidoreductase subunit M (121 aa).

This sequence belongs to the complex I NdhM subunit family. As to quaternary structure, NDH-1 can be composed of about 15 different subunits; different subcomplexes with different compositions have been identified which probably have different functions.

It is found in the cellular thylakoid membrane. The enzyme catalyses a plastoquinone + NADH + (n+1) H(+)(in) = a plastoquinol + NAD(+) + n H(+)(out). It catalyses the reaction a plastoquinone + NADPH + (n+1) H(+)(in) = a plastoquinol + NADP(+) + n H(+)(out). In terms of biological role, NDH-1 shuttles electrons from an unknown electron donor, via FMN and iron-sulfur (Fe-S) centers, to quinones in the respiratory and/or the photosynthetic chain. The immediate electron acceptor for the enzyme in this species is believed to be plastoquinone. Couples the redox reaction to proton translocation, and thus conserves the redox energy in a proton gradient. Cyanobacterial NDH-1 also plays a role in inorganic carbon-concentration. The protein is NAD(P)H-quinone oxidoreductase subunit M of Synechococcus sp. (strain JA-2-3B'a(2-13)) (Cyanobacteria bacterium Yellowstone B-Prime).